A 188-amino-acid chain; its full sequence is Peroxynitrite isomerase (188 aa).

The short motif at 35–41 is the GXWXGXG element; sequence GTWRGEG. Heme b is bound at residue His-178.

Belongs to the nitrobindin family. In terms of assembly, homodimer. The cofactor is heme b.

It catalyses the reaction peroxynitrite = nitrate. It functions in the pathway nitrogen metabolism. Heme-binding protein able to scavenge peroxynitrite and to protect free L-tyrosine against peroxynitrite-mediated nitration, by acting as a peroxynitrite isomerase that converts peroxynitrite to nitrate. Therefore, this protein likely plays a role in peroxynitrite sensing and in the detoxification of reactive nitrogen and oxygen species (RNS and ROS, respectively). Is able to bind nitric oxide (NO) in vitro, but may act as a sensor of peroxynitrite levels in vivo. The polypeptide is Peroxynitrite isomerase (Frankia casuarinae (strain DSM 45818 / CECT 9043 / HFP020203 / CcI3)).